A 356-amino-acid chain; its full sequence is UDP-N-acetylglucosamine--N-acetylmuramyl-(pentapeptide) pyrophosphoryl-undecaprenol N-acetylglucosamine transferase (356 aa).

UDP-N-acetyl-alpha-D-glucosamine contacts are provided by residues 11 to 13, Asn-122, Ser-186, and Gln-287; that span reads TGG.

Belongs to the glycosyltransferase 28 family. MurG subfamily.

It localises to the cell inner membrane. It carries out the reaction di-trans,octa-cis-undecaprenyl diphospho-N-acetyl-alpha-D-muramoyl-L-alanyl-D-glutamyl-meso-2,6-diaminopimeloyl-D-alanyl-D-alanine + UDP-N-acetyl-alpha-D-glucosamine = di-trans,octa-cis-undecaprenyl diphospho-[N-acetyl-alpha-D-glucosaminyl-(1-&gt;4)]-N-acetyl-alpha-D-muramoyl-L-alanyl-D-glutamyl-meso-2,6-diaminopimeloyl-D-alanyl-D-alanine + UDP + H(+). It functions in the pathway cell wall biogenesis; peptidoglycan biosynthesis. In terms of biological role, cell wall formation. Catalyzes the transfer of a GlcNAc subunit on undecaprenyl-pyrophosphoryl-MurNAc-pentapeptide (lipid intermediate I) to form undecaprenyl-pyrophosphoryl-MurNAc-(pentapeptide)GlcNAc (lipid intermediate II). This Anaplasma marginale (strain St. Maries) protein is UDP-N-acetylglucosamine--N-acetylmuramyl-(pentapeptide) pyrophosphoryl-undecaprenol N-acetylglucosamine transferase.